A 99-amino-acid polypeptide reads, in one-letter code: Acylphosphatase (99 aa).

Residues 10-99 (RLTAFVHGHV…PRGVEGFTER (90 aa)) form the Acylphosphatase-like domain. Catalysis depends on residues arginine 25 and asparagine 43.

This sequence belongs to the acylphosphatase family.

The enzyme catalyses an acyl phosphate + H2O = a carboxylate + phosphate + H(+). The chain is Acylphosphatase (acyP) from Corynebacterium efficiens (strain DSM 44549 / YS-314 / AJ 12310 / JCM 11189 / NBRC 100395).